The chain runs to 484 residues: tRNA sulfurtransferase (484 aa).

Positions 63-167 (DVFADRLACI…QDKLYMVERR (105 aa)) constitute a THUMP domain. Residues 185-186 (LI), Lys267, Gly289, and Gln298 contribute to the ATP site. A disulfide bridge links Cys346 with Cys458. Residues 406–484 (VASGEIIIDV…GYTNVKVYRP (79 aa)) form the Rhodanese domain. The active-site Cysteine persulfide intermediate is the Cys458.

This sequence belongs to the ThiI family.

It is found in the cytoplasm. It carries out the reaction [ThiI sulfur-carrier protein]-S-sulfanyl-L-cysteine + a uridine in tRNA + 2 reduced [2Fe-2S]-[ferredoxin] + ATP + H(+) = [ThiI sulfur-carrier protein]-L-cysteine + a 4-thiouridine in tRNA + 2 oxidized [2Fe-2S]-[ferredoxin] + AMP + diphosphate. The catalysed reaction is [ThiS sulfur-carrier protein]-C-terminal Gly-Gly-AMP + S-sulfanyl-L-cysteinyl-[cysteine desulfurase] + AH2 = [ThiS sulfur-carrier protein]-C-terminal-Gly-aminoethanethioate + L-cysteinyl-[cysteine desulfurase] + A + AMP + 2 H(+). It functions in the pathway cofactor biosynthesis; thiamine diphosphate biosynthesis. Functionally, catalyzes the ATP-dependent transfer of a sulfur to tRNA to produce 4-thiouridine in position 8 of tRNAs, which functions as a near-UV photosensor. Also catalyzes the transfer of sulfur to the sulfur carrier protein ThiS, forming ThiS-thiocarboxylate. This is a step in the synthesis of thiazole, in the thiamine biosynthesis pathway. The sulfur is donated as persulfide by IscS. This is tRNA sulfurtransferase from Shewanella frigidimarina (strain NCIMB 400).